A 511-amino-acid polypeptide reads, in one-letter code: Ribonuclease Y (511 aa).

A helical membrane pass occupies residues valine 3–phenylalanine 23. In terms of domain architecture, KH spans serine 201–leucine 261. Residues leucine 327–alanine 420 form the HD domain.

This sequence belongs to the RNase Y family.

Its subcellular location is the cell membrane. Functionally, endoribonuclease that initiates mRNA decay. The chain is Ribonuclease Y from Bacteroides fragilis (strain ATCC 25285 / DSM 2151 / CCUG 4856 / JCM 11019 / LMG 10263 / NCTC 9343 / Onslow / VPI 2553 / EN-2).